An 822-amino-acid polypeptide reads, in one-letter code: BDNF/NT-3 growth factors receptor (822 aa).

An N-terminal signal peptide occupies residues 1 to 31 (MSSWIRWHGPAMARLWGFCWLVVGFWRAAFA). 2 cysteine pairs are disulfide-bonded: C32–C38 and C36–C45. Positions 32 to 61 (CPTSCKCSASRIWCSDPSPGIVAFPRLEPN) constitute an LRRNT domain. The Extracellular segment spans residues 32-430 (CPTSCKCSAS…DVTDKTGREH (399 aa)). 3 N-linked (GlcNAc...) asparagine glycosylation sites follow: N67, N95, and N121. LRR repeat units lie at residues 92 to 113 (GLRN…AFLK) and 116 to 137 (NLQH…HFRH). In terms of domain architecture, LRRCT spans 148–196 (NPFTCSCDIMWIKTLQEAKSSPDTQDLYCLNESSKNIPLANLQIPNCGL). Cystine bridges form between C152–C176 and C154–C194. N-linked (GlcNAc...) asparagine glycosylation is found at N178, N205, N241, N254, N280, N325, N338, and N412. Ig-like C2-type domains are found at residues 197–282 (PSAN…VNLT) and 295–365 (PTSD…IAKN). C218 and C266 are oxidised to a cystine. The cysteines at positions 302 and 345 are disulfide-linked. A helical membrane pass occupies residues 431–454 (LSVYAVVVIASVVGFCLLVMLFLL). The interaction with MAPK8IP3/JIP3 stretch occupies residues 455 to 466 (KLARHSKFGMKG). The Cytoplasmic portion of the chain corresponds to 455-822 (KLARHSKFGM…ASPVYLDILG (368 aa)). The disordered stretch occupies residues 475–498 (DDSASPLHHISNGSNTPSSSEGGP). Over residues 485 to 495 (SNGSNTPSSSE) the composition is skewed to polar residues. Residue Y516 is modified to Phosphotyrosine; by autocatalysis. One can recognise a Protein kinase domain in the interval 538–807 (IVLKRELGEG…KNIKGIHTLL (270 aa)). ATP is bound by residues 544–552 (LGEGAFGKV) and K572. Catalysis depends on D676, which acts as the Proton acceptor. Residues Y702, Y706, Y707, and Y817 each carry the phosphotyrosine; by autocatalysis modification.

It belongs to the protein kinase superfamily. Tyr protein kinase family. Insulin receptor subfamily. In terms of assembly, exists in a dynamic equilibrium between monomeric (low affinity) and dimeric (high affinity) structures. Interacts (phosphorylated upon activation by BDNF) with SHC1; mediates SHC1 phosphorylation and activation. Interacts (phosphorylated upon activation by BDNF) with PLCG1 and/or PLCG2; mediates PLCG1 phosphorylation and activation. Interacts with SH2B1 and SH2B2. Interacts with NGFR; may regulate the ligand specificity of the receptor. Interacts with SORCS2; this interaction is important for normal targeting to post-synaptic densities in response to high-frequency stimulation. Interacts (phosphorylated upon ligand-binding) with SH2D1A; regulates NTRK2. Interacts with SQSTM1 and KIDINS220. Interacts (phosphorylated upon ligand-binding) with FRS2; activates the MAPK signaling pathway. Interacts with APPL1. Interacts with MAPK8IP3/JIP3 and KLC1; interaction with KLC1 is mediated by MAPK8IP3/JIP3. Interacts with SORL1; this interaction facilitates NTRK2 trafficking between synaptic plasma membranes, postsynaptic densities and cell soma, hence positively regulates BDNF signaling. Interacts with SLITRK2. In terms of processing, phosphorylated. Undergoes ligand-mediated autophosphorylation that is required for interaction with SHC1 and PLCG1 and other downstream effectors. Isoform TrkB-T-Shc is not phosphorylated. Ubiquitinated. Undergoes polyubiquitination upon activation; regulated by NGFR. Ubiquitination regulates the internalization of the receptor. In terms of tissue distribution, isoform TrkB is expressed in the central and peripheral nervous system. In the central nervous system (CNS), expression is observed in the cerebral cortex, hippocampus, thalamus, choroid plexus, granular layer of the cerebellum, brain stem, and spinal cord. In the peripheral nervous system, it is expressed in many cranial ganglia, the ophthalmic nerve, the vestibular system, multiple facial structures, the submaxillary glands, and dorsal root ganglia. Isoform TrkB-T1 is mainly expressed in the brain but also detected in other tissues including pancreas, kidney and heart. Isoform TrkB-T-Shc is predominantly expressed in the brain.

It is found in the cell membrane. The protein resides in the endosome membrane. Its subcellular location is the early endosome membrane. The protein localises to the cell projection. It localises to the axon. It is found in the dendrite. The protein resides in the cytoplasm. Its subcellular location is the perinuclear region. The protein localises to the postsynaptic density. The catalysed reaction is L-tyrosyl-[protein] + ATP = O-phospho-L-tyrosyl-[protein] + ADP + H(+). Its activity is regulated as follows. The neuronal activity and the influx of calcium positively regulate the kinase activity and the internalization of the receptor which are both important for active signaling. Regulated by NGFR that may control the internalization of the receptor. NGFR may also stimulate the activation by BDNF compared to NTF3 and NTF4. SH2D1A inhibits the autophosphorylation of the receptor, and alters the recruitment and activation of downstream effectors and signaling cascades. The formation of active receptors dimers able to fully transduce the ligand-mediated signal, may be negatively regulated by the formation of inactive heterodimers with the non-catalytic isoforms. Functionally, receptor tyrosine kinase involved in the development and the maturation of the central and the peripheral nervous systems through regulation of neuron survival, proliferation, migration, differentiation, and synapse formation and plasticity. Receptor for BDNF/brain-derived neurotrophic factor and NTF4/neurotrophin-4. Alternatively can also bind NTF3/neurotrophin-3 which is less efficient in activating the receptor but regulates neuron survival through NTRK2. Upon ligand-binding, undergoes homodimerization, autophosphorylation and activation. Recruits, phosphorylates and/or activates several downstream effectors including SHC1, FRS2, SH2B1, SH2B2 and PLCG1 that regulate distinct overlapping signaling cascades. Through SHC1, FRS2, SH2B1, SH2B2 activates the GRB2-Ras-MAPK cascade that regulates for instance neuronal differentiation including neurite outgrowth. Through the same effectors controls the Ras-PI3 kinase-AKT1 signaling cascade that mainly regulates growth and survival. Through PLCG1 and the downstream protein kinase C-regulated pathways controls synaptic plasticity. Thereby, plays a role in learning and memory by regulating both short term synaptic function and long-term potentiation. PLCG1 also leads to NF-Kappa-B activation and the transcription of genes involved in cell survival. Hence, it is able to suppress anoikis, the apoptosis resulting from loss of cell-matrix interactions. May also play a role in neutrophin-dependent calcium signaling in glial cells and mediate communication between neurons and glia. The polypeptide is BDNF/NT-3 growth factors receptor (NTRK2) (Homo sapiens (Human)).